The primary structure comprises 130 residues: Large-conductance mechanosensitive channel (130 aa).

2 helical membrane-spanning segments follow: residues 11-31 (FALK…AAFG) and 70-90 (GAFI…FIFV).

This sequence belongs to the MscL family. As to quaternary structure, homopentamer.

It is found in the cell membrane. Its function is as follows. Channel that opens in response to stretch forces in the membrane lipid bilayer. May participate in the regulation of osmotic pressure changes within the cell. The polypeptide is Large-conductance mechanosensitive channel (Listeria welshimeri serovar 6b (strain ATCC 35897 / DSM 20650 / CCUG 15529 / CIP 8149 / NCTC 11857 / SLCC 5334 / V8)).